A 350-amino-acid chain; its full sequence is Patr class I histocompatibility antigen, alpha chain E (350 aa).

The N-terminal stretch at 1-21 (MVDGTLLLLLSEALALTQTWA) is a signal peptide. Residues 22–111 (GSHSLKYFHT…LRGYYNQSEA (90 aa)) are alpha-1. The Extracellular portion of the chain corresponds to 22–305 (GSHSLKYFHT…KPASQPTIPI (284 aa)). N-linked (GlcNAc...) asparagine glycosylation occurs at asparagine 107. The tract at residues 112-203 (GSHTLQWMHG…EKGKETLLHL (92 aa)) is alpha-2. Cystine bridges form between cysteine 122–cysteine 185 and cysteine 224–cysteine 280. Positions 204 to 295 (EPPKTHVTHH…GLPEPLTLRW (92 aa)) are alpha-3. Positions 206–294 (PKTHVTHHPI…EGLPEPLTLR (89 aa)) constitute an Ig-like C1-type domain. A connecting peptide region spans residues 296–305 (KPASQPTIPI). Residues 306 to 329 (VGIIAGLVLLGSVVSGAVVAAVMW) form a helical membrane-spanning segment. Over 330 to 350 (RKKSSGGKGRSYSKAEWSDSA) the chain is Cytoplasmic.

This sequence belongs to the MHC class I family. In terms of assembly, heterodimer of an alpha chain and a beta chain (beta-2-microglobulin).

It is found in the membrane. Its function is as follows. Preferably binds to a peptide derived from the signal sequence of most HLA-A, -B, -C and -G molecules. This is Patr class I histocompatibility antigen, alpha chain E (Patr-E) from Pan troglodytes (Chimpanzee).